Consider the following 190-residue polypeptide: T-cell receptor gamma chain C region 5/10-13 (190 aa).

The interval 1–157 (DKRTDSDFSP…LQVTTTYAFY (157 aa)) is c region. A helical transmembrane segment spans residues 158–178 (TYLILFFKSMVHLAFVVFCLF). Residues 179-190 (RRAAMSCDDQRS) are Cytoplasmic-facing.

It localises to the membrane. The chain is T-cell receptor gamma chain C region 5/10-13 from Mus musculus (Mouse).